Consider the following 205-residue polypeptide: MAEEPEPDLGVAEGSEDQALEMPSWKAPEDIDPQPGSYEIRHYGPAKWVSTCVESLDWDSAIQTGFTKLNGYIQGKNEKEMKIKLTAPVTSYVEPGSSPFSESTITISLYIPSEQQPDPPRPSESDVFIEDRAEMTVFVRSFDGFSSGQKNQEQLLTLANILREEGKVFNEKVFYTAGYSSPFQLLDRNNEVWLIQKNEPSVENK.

Residues methionine 1–serine 37 form a disordered region. The residue at position 2 (alanine 2) is an N-acetylalanine. Serine 181 carries the post-translational modification Phosphoserine.

It belongs to the HEBP family. In terms of assembly, monomer. Interacts with LRPPRC. May interact with BCL2L1; an interaction with BCL2L1 was observed using a peptide, but not with the full-length protein. The full-length protein would have to undergo a major conformation change for the interaction to occur. Interacts with PDCD6.

The protein resides in the cytoplasm. It localises to the mitochondrion. In terms of biological role, can promote mitochondrial permeability transition and facilitate necrotic cell death under different types of stress conditions. May have low affinity for heme. The chain is Heme-binding protein 2 (Hebp2) from Mus musculus (Mouse).